We begin with the raw amino-acid sequence, 355 residues long: Probable low-specificity L-threonine aldolase 2 (355 aa).

Position 211 is an N6-(pyridoxal phosphate)lysine (lysine 211).

This sequence belongs to the threonine aldolase family. Pyridoxal 5'-phosphate is required as a cofactor. As to expression, expressed in roots, leaf vasculature and flowers.

The catalysed reaction is L-threonine = acetaldehyde + glycine. It catalyses the reaction L-allo-threonine = acetaldehyde + glycine. It functions in the pathway amino-acid degradation; L-threonine degradation via aldolase pathway; acetaldehyde and glycine from L-threonine: step 1/1. Its function is as follows. Threonine aldolase involved in threonine degradation to glycine. May play a role in the removal of L-allo-threonine. The protein is Probable low-specificity L-threonine aldolase 2 (THA2) of Arabidopsis thaliana (Mouse-ear cress).